The sequence spans 248 residues: Deoxyribose-phosphate aldolase (248 aa).

Asp-117 acts as the Proton donor/acceptor in catalysis. Lys-179 (schiff-base intermediate with acetaldehyde) is an active-site residue. The active-site Proton donor/acceptor is Lys-208.

Belongs to the DeoC/FbaB aldolase family. DeoC type 1 subfamily.

It localises to the cytoplasm. It catalyses the reaction 2-deoxy-D-ribose 5-phosphate = D-glyceraldehyde 3-phosphate + acetaldehyde. The protein operates within carbohydrate degradation; 2-deoxy-D-ribose 1-phosphate degradation; D-glyceraldehyde 3-phosphate and acetaldehyde from 2-deoxy-alpha-D-ribose 1-phosphate: step 2/2. Its function is as follows. Catalyzes a reversible aldol reaction between acetaldehyde and D-glyceraldehyde 3-phosphate to generate 2-deoxy-D-ribose 5-phosphate. In Thermotoga maritima (strain ATCC 43589 / DSM 3109 / JCM 10099 / NBRC 100826 / MSB8), this protein is Deoxyribose-phosphate aldolase.